The sequence spans 360 residues: Protein Wnt-2 (360 aa).

The signal sequence occupies residues 1-25 (MNAPLGGIWLWLPLLLTWLTPEVSS). 11 disulfide bridges follow: Cys76-Cys87, Cys127-Cys135, Cys137-Cys157, Cys206-Cys220, Cys208-Cys215, Cys278-Cys309, Cys294-Cys304, Cys308-Cys348, Cys324-Cys339, Cys326-Cys336, and Cys331-Cys332. A lipid anchor (O-palmitoleoyl serine; by PORCN) is attached at Ser212. Residue Asn295 is glycosylated (N-linked (GlcNAc...) asparagine).

The protein belongs to the Wnt family. Palmitoleoylation is required for efficient binding to frizzled receptors. Depalmitoleoylation leads to Wnt signaling pathway inhibition.

It is found in the secreted. It localises to the extracellular space. Its subcellular location is the extracellular matrix. Its function is as follows. Ligand for members of the frizzled family of seven transmembrane receptors. Functions in the canonical Wnt signaling pathway that results in activation of transcription factors of the TCF/LEF family. Functions as a upstream regulator of FGF10 expression. Plays an important role in embryonic lung development. May contribute to embryonic brain development by regulating the proliferation of dopaminergic precursors and neurons. This chain is Protein Wnt-2 (WNT2), found in Equus caballus (Horse).